The sequence spans 689 residues: Elongation factor G (689 aa).

Residues 8–282 (DKVRNIGIMA…AIVRYLPSPL (275 aa)) form the tr-type G domain. Residues 17–24 (AHIDAGKT), 81–85 (DTPGH), and 135–138 (NKMD) each bind GTP.

The protein belongs to the TRAFAC class translation factor GTPase superfamily. Classic translation factor GTPase family. EF-G/EF-2 subfamily.

Its subcellular location is the cytoplasm. Functionally, catalyzes the GTP-dependent ribosomal translocation step during translation elongation. During this step, the ribosome changes from the pre-translocational (PRE) to the post-translocational (POST) state as the newly formed A-site-bound peptidyl-tRNA and P-site-bound deacylated tRNA move to the P and E sites, respectively. Catalyzes the coordinated movement of the two tRNA molecules, the mRNA and conformational changes in the ribosome. The chain is Elongation factor G from Thermoanaerobacter pseudethanolicus (strain ATCC 33223 / 39E) (Clostridium thermohydrosulfuricum).